Here is a 205-residue protein sequence, read N- to C-terminus: uncharacterized protein (205 aa).

This is an uncharacterized protein from Picosynechococcus sp. (strain ATCC 27264 / PCC 7002 / PR-6) (Agmenellum quadruplicatum).